We begin with the raw amino-acid sequence, 261 residues long: uncharacterized protein (261 aa).

An N-acetyltransferase domain is found at 135 to 261 (LVLKRIDEDI…VTEYTIYYSG (127 aa)).

The protein belongs to the acetyltransferase family.

This is an uncharacterized protein from Bacillus subtilis (strain 168).